We begin with the raw amino-acid sequence, 425 residues long: MLDQRLVRDNPDLIANELGRRGMTLDLTGLQLIAQQQRNLEEQRSSLQAEGNRIGKEVGQRIQQGSDPKASDVAELRHQGNLIKQKVAVLEDEEKQLSARLREQLLSLPNLPSPDCPEGRDENDNQERHCWGKPREGKDLLEHWSIAERLNLFETERSVRIAQSRFVTLMGQGARLERALINFMLDLHTSKGYREVMPPVLVNTASLTGSGQLPKFAEESFRCAEDDLWLTPTAEVPVTSLHRDEIIPADQLPLRYAAYSPCFRREAGSYGRDTRGLIRLHQFNKVELYWFVHPDHSQAAHAQITADAEAVLQALELPYRVIELCTGDLGFSSSRTYDLEVWLPGAGAFREISSCSICGDFQARRSAIRTKDQKGTRLIHTLNGSGLAVGRTMAALLETGQQSDGSVLLPKALVPYFGKDRLEPE.

Disordered regions lie at residues 43–68 and 108–131; these read QRSS…GSDP and LPNL…RHCW. The span at 117 to 131 shows a compositional bias: basic and acidic residues; the sequence is PEGRDENDNQERHCW. 233–235 contributes to the L-serine binding site; it reads TAE. An ATP-binding site is contributed by 264-266; the sequence is RRE. Residue Glu287 participates in L-serine binding. An ATP-binding site is contributed by 351–354; sequence EISS. Ser385 is a binding site for L-serine.

It belongs to the class-II aminoacyl-tRNA synthetase family. Type-1 seryl-tRNA synthetase subfamily. Homodimer. The tRNA molecule binds across the dimer.

It localises to the cytoplasm. The enzyme catalyses tRNA(Ser) + L-serine + ATP = L-seryl-tRNA(Ser) + AMP + diphosphate + H(+). The catalysed reaction is tRNA(Sec) + L-serine + ATP = L-seryl-tRNA(Sec) + AMP + diphosphate + H(+). Its pathway is aminoacyl-tRNA biosynthesis; selenocysteinyl-tRNA(Sec) biosynthesis; L-seryl-tRNA(Sec) from L-serine and tRNA(Sec): step 1/1. Its function is as follows. Catalyzes the attachment of serine to tRNA(Ser). Is also able to aminoacylate tRNA(Sec) with serine, to form the misacylated tRNA L-seryl-tRNA(Sec), which will be further converted into selenocysteinyl-tRNA(Sec). The polypeptide is Serine--tRNA ligase (Prochlorococcus marinus (strain MIT 9303)).